Here is a 414-residue protein sequence, read N- to C-terminus: MLRKRLQAGLCSLLLVLVLVFGPMERAIAFTDEQDLLLQAWRYVSQAYVDETFNHQNWWLIRQKFLKRPLKTRDEAYEAVGEMLALLDDPYTRLLRPEQYRSLKVSTSGELSGVGLQINVNPEVDVLEVILPLPGSPAEAAGIEAKDQILAIDGIDTRNIGLEEAAARMRGKKGSTVSLTVKSPKTDTVRTVKVTRDTIALNPVYDKLDEKNGEKVGYIRLNQFSANAKTEIIKSLNQLQKQGADRYVLDLRNNPGGLLQAGIEIARLWLDQETIVYTVNRQGIFESYSAVGQPLTDAPLVVLVNQATASASEILAGALQDNGRAMLVGEKTFGKGLIQSLFELPDGAGMAVTVAKYETPLHHDINKLGIMPDEVVPQEPIGYAMMGSETDLQYQAALDLLTQDQAIAQISQAS.

Residues 1 to 29 form the signal peptide; the sequence is MLRKRLQAGLCSLLLVLVLVFGPMERAIA. One can recognise a PDZ domain in the interval 100 to 184; it reads YRSLKVSTSG…STVSLTVKSP (85 aa). Residues S310, D321, and K335 each act as charge relay system in the active site.

The protein belongs to the peptidase S41A family.

It localises to the cellular thylakoid lumen. The enzyme catalyses The enzyme shows specific recognition of a C-terminal tripeptide, Xaa-Yaa-Zaa, in which Xaa is preferably Ala or Leu, Yaa is preferably Ala or Tyr, and Zaa is preferably Ala, but then cleaves at a variable distance from the C-terminus. A typical cleavage is -Ala-Ala-|-Arg-Ala-Ala-Lys-Glu-Asn-Tyr-Ala-Leu-Ala-Ala.. Its function is as follows. Cleavage of the 16 C-terminal residues from the D1 precursor of photosystem II (PSII). This proteolytic processing is necessary to allow the light-driven assembly of the oxygen-evolving cluster (a tetranuclear manganese), which is responsible for photosynthetic water oxidation. The chain is Carboxyl-terminal-processing protease (ctpA) from Picosynechococcus sp. (strain ATCC 27264 / PCC 7002 / PR-6) (Agmenellum quadruplicatum).